A 409-amino-acid polypeptide reads, in one-letter code: Adenosine deaminase (409 aa).

Zn(2+)-binding residues include H65, H67, H207, and D314.

The protein belongs to the metallo-dependent hydrolases superfamily. Requires Zn(2+) as cofactor.

It carries out the reaction adenosine + H2O + H(+) = inosine + NH4(+). Catalyzes the deamination of adenosine into inosine. Is also able to deaminate adenine, but with considerably less efficiency. Is not active toward 6-chloroadenine. The polypeptide is Adenosine deaminase (Helicobacter pylori (strain ATCC 700392 / 26695) (Campylobacter pylori)).